Consider the following 342-residue polypeptide: Forkhead box protein D5-C (342 aa).

Residues 1–89 (MNLSQDSSAH…KHSLDTTTNG (89 aa)) form a disordered region. The span at 20–34 (SDDEDEIDILGEDDP) shows a compositional bias: acidic residues. A compositionally biased stretch (polar residues) spans 59–70 (SKLSCNESASHS). Residues 71–83 (SGERERGTSKHSL) are compositionally biased toward basic and acidic residues. The fork-head DNA-binding region spans 97-191 (KPPYSYIALI…DNGSFLRRRK (95 aa)).

At the onset of gastrulation, expressed in the superficial layer of cells in the dorsal blastopore lip (Spemann organizer). In the open neural plate, expressed in a row of cells destined to become the floor plate of the neural tube. After neural tube closure, only detected in the tailtip and a small area located at the midbrain/hindbrain boundary.

The protein localises to the nucleus. Its function is as follows. Transcriptional repressor. The chain is Forkhead box protein D5-C (foxd5-c) from Xenopus laevis (African clawed frog).